A 178-amino-acid polypeptide reads, in one-letter code: Ribulose bisphosphate carboxylase small subunit, chloroplastic (178 aa).

Residues methionine 1–arginine 55 constitute a chloroplast transit peptide.

It belongs to the RuBisCO small chain family. In terms of assembly, heterohexadecamer of 8 large and 8 small subunits.

Its subcellular location is the plastid. The protein resides in the chloroplast. In terms of biological role, ruBisCO catalyzes two reactions: the carboxylation of D-ribulose 1,5-bisphosphate, the primary event in carbon dioxide fixation, as well as the oxidative fragmentation of the pentose substrate. Both reactions occur simultaneously and in competition at the same active site. Although the small subunit is not catalytic it is essential for maximal activity. The chain is Ribulose bisphosphate carboxylase small subunit, chloroplastic from Zantedeschia aethiopica (White calla lily).